Reading from the N-terminus, the 522-residue chain is Maturase K (522 aa).

It belongs to the intron maturase 2 family. MatK subfamily.

It is found in the plastid. Its subcellular location is the chloroplast. In terms of biological role, usually encoded in the trnK tRNA gene intron. Probably assists in splicing its own and other chloroplast group II introns. In Aristea glauca, this protein is Maturase K.